Reading from the N-terminus, the 406-residue chain is Eukaryotic initiation factor 4A-I (406 aa).

Positions 1–21 (MSASQDSRSRDNGPDGMEPEG) are disordered. Ser2 carries the post-translational modification N-acetylserine. Phosphoserine is present on Ser4. A Q motif motif is present at residues 32–60 (DSLDDMNLSESLLRGIYAYGFEKPSAIQQ). The region spanning 63-234 (ILSCIKGYDV…KKFMRDPIRI (172 aa)) is the Helicase ATP-binding domain. Residue 76–83 (AQSGTGKT) coordinates ATP. Residue Lys118 is modified to N6-acetyllysine. A Glycyl lysine isopeptide (Lys-Gly) (interchain with G-Cter in SUMO2) cross-link involves residue Lys146. Thr158 carries the post-translational modification Phosphothreonine. Lys174 carries the post-translational modification N6-acetyllysine. The short motif at 182–185 (DEAD) is the DEAD box element. N6-acetyllysine is present on Lys193. Residue Lys225 forms a Glycyl lysine isopeptide (Lys-Gly) (interchain with G-Cter in SUMO2) linkage. Lys238 is modified (N6-acetyllysine; alternate). Lys238 participates in a covalent cross-link: Glycyl lysine isopeptide (Lys-Gly) (interchain with G-Cter in SUMO2); alternate. The region spanning 245–406 (GIRQFYINVE…EMPLNVADLI (162 aa)) is the Helicase C-terminal domain. Residues Lys309, Lys369, and Lys381 each participate in a glycyl lysine isopeptide (Lys-Gly) (interchain with G-Cter in SUMO2) cross-link.

The protein belongs to the DEAD box helicase family. eIF4A subfamily. In terms of assembly, eIF4F is a multi-subunit complex, the composition of which varies with external and internal environmental conditions. It is composed of at least EIF4A, EIF4E and EIF4G1/EIF4G3. Interacts with PAIP1, EIF4E and UPF2. Found in a complex with XPO7, EIF4A1, ARHGAP1, VPS26A, VPS29, VPS35 and SFN. May interact with NOM1. Interacts with PDCD4; this interferes with the interaction between EIF4A and EIF4G. Interacts with RBM4. Interacts with DDX3X in an RNA-independent manner. Interacts with PKP1 (via N-terminus); the interaction promotes EIF4A1 recruitment to the cap-dependent translation complex and EIF4A1 ATPase activity.

It is found in the cytoplasm. The protein resides in the perinuclear region. The protein localises to the cell membrane. It localises to the stress granule. The enzyme catalyses ATP + H2O = ADP + phosphate + H(+). In terms of biological role, ATP-dependent RNA helicase which is a subunit of the eIF4F complex involved in cap recognition and is required for mRNA binding to ribosome. In the current model of translation initiation, eIF4A unwinds RNA secondary structures in the 5'-UTR of mRNAs which is necessary to allow efficient binding of the small ribosomal subunit, and subsequent scanning for the initiator codon. As a result, promotes cell proliferation and growth. The chain is Eukaryotic initiation factor 4A-I (EIF4A1) from Pongo abelii (Sumatran orangutan).